The sequence spans 165 residues: Phosphopantetheine adenylyltransferase (165 aa).

Position 10 (Ser-10) interacts with substrate. ATP contacts are provided by residues 10-11 (SF) and His-18. Substrate contacts are provided by Lys-42, Leu-74, and Arg-88. ATP contacts are provided by residues 89 to 91 (GLR), Glu-99, and 124 to 130 (YSYLSSS).

The protein belongs to the bacterial CoaD family. As to quaternary structure, homohexamer. The cofactor is Mg(2+).

It localises to the cytoplasm. The enzyme catalyses (R)-4'-phosphopantetheine + ATP + H(+) = 3'-dephospho-CoA + diphosphate. It participates in cofactor biosynthesis; coenzyme A biosynthesis; CoA from (R)-pantothenate: step 4/5. In terms of biological role, reversibly transfers an adenylyl group from ATP to 4'-phosphopantetheine, yielding dephospho-CoA (dPCoA) and pyrophosphate. The polypeptide is Phosphopantetheine adenylyltransferase (Halalkalibacterium halodurans (strain ATCC BAA-125 / DSM 18197 / FERM 7344 / JCM 9153 / C-125) (Bacillus halodurans)).